The primary structure comprises 1755 residues: Transposon Ty1-ER2 Gag-Pol polyprotein (1755 aa).

Composition is skewed to polar residues over residues 1 to 10 (MESQQLSNYP), 48 to 60 (TKAN…TPAS), and 127 to 152 (QSQF…GNTF). 3 disordered regions span residues 1–93 (MESQ…MMTQ), 126–173 (PQSQ…RPPP), and 352–421 (GSRN…SKST). The segment covering 153-165 (TDSSSADSDMTST) has biased composition (low complexity). The segment at 299-401 (NNGIHINNKV…NSKSKTARAH (103 aa)) is RNA-binding. Residues 402–418 (NVSTSNNSPSTDNDSIS) are compositionally biased toward low complexity. The For protease activity; shared with dimeric partner role is filled by Asp-461. Residues 583–640 (NVHTSESTRKYPYPFIHRMLAHANAQTIRYSLKNNTITYFNESDVDWSSAIDYQCPDC) are integrase-type zinc finger-like. An Integrase catalytic domain is found at 660 to 835 (NSYEPFQYLH…AGLDISTLLP (176 aa)). Mg(2+) is bound by residues Asp-671 and Asp-736. Residues 958–1170 (AVSPTDSTPP…SSLGGIGDSN (213 aa)) form a disordered region. Residues 960-969 (SPTDSTPPST) show a composition bias toward low complexity. The span at 1005–1015 (STPQISDIEST) shows a compositional bias: polar residues. Over residues 1038–1053 (ESSHASKSKDFRHSDS) the composition is skewed to basic and acidic residues. Polar residues-rich tracts occupy residues 1054-1082 (YSDN…QTSE) and 1095-1106 (SIDTSSSESNSL). A Bipartite nuclear localization signal motif is present at residues 1178 to 1212 (KKRSLEDNETEIKVSRDTWNTKNMRSLEPPRSKKR). The Reverse transcriptase Ty1/copia-type domain maps to 1338–1476 (NNYYITQLDI…DILGLEIKYQ (139 aa)). Mg(2+)-binding residues include Asp-1346, Asp-1427, Asp-1428, Asp-1610, Glu-1652, and Asp-1685. Positions 1610–1752 (DASYGNQPYY…IKTFKLLTNK (143 aa)) constitute an RNase H Ty1/copia-type domain.

As to quaternary structure, the capsid protein forms a homotrimer, from which the VLPs are assembled. The protease is a homodimer, whose active site consists of two apposed aspartic acid residues. Initially, virus-like particles (VLPs) are composed of the structural unprocessed proteins Gag and Gag-Pol, and also contain the host initiator methionine tRNA (tRNA(i)-Met) which serves as a primer for minus-strand DNA synthesis, and a dimer of genomic Ty RNA. Processing of the polyproteins occurs within the particle and proceeds by an ordered pathway, called maturation. First, the protease (PR) is released by autocatalytic cleavage of the Gag-Pol polyprotein yielding capsid protein p45 and a Pol-p154 precursor protein. This cleavage is a prerequisite for subsequent processing of Pol-p154 at the remaining sites to release the mature structural and catalytic proteins. Maturation takes place prior to the RT reaction and is required to produce transposition-competent VLPs.

It is found in the cytoplasm. The protein resides in the nucleus. It catalyses the reaction DNA(n) + a 2'-deoxyribonucleoside 5'-triphosphate = DNA(n+1) + diphosphate. The catalysed reaction is Endonucleolytic cleavage to 5'-phosphomonoester.. In terms of biological role, capsid protein (CA) is the structural component of the virus-like particle (VLP), forming the shell that encapsulates the retrotransposons dimeric RNA genome. The particles are assembled from trimer-clustered units and there are holes in the capsid shells that allow for the diffusion of macromolecules. CA also has nucleocapsid-like chaperone activity, promoting primer tRNA(i)-Met annealing to the multipartite primer-binding site (PBS), dimerization of Ty1 RNA and initiation of reverse transcription. Its function is as follows. The aspartyl protease (PR) mediates the proteolytic cleavages of the Gag and Gag-Pol polyproteins after assembly of the VLP. Functionally, reverse transcriptase/ribonuclease H (RT) is a multifunctional enzyme that catalyzes the conversion of the retro-elements RNA genome into dsDNA within the VLP. The enzyme displays a DNA polymerase activity that can copy either DNA or RNA templates, and a ribonuclease H (RNase H) activity that cleaves the RNA strand of RNA-DNA heteroduplexes during plus-strand synthesis and hydrolyzes RNA primers. The conversion leads to a linear dsDNA copy of the retrotransposon that includes long terminal repeats (LTRs) at both ends. Integrase (IN) targets the VLP to the nucleus, where a subparticle preintegration complex (PIC) containing at least integrase and the newly synthesized dsDNA copy of the retrotransposon must transit the nuclear membrane. Once in the nucleus, integrase performs the integration of the dsDNA into the host genome. This is Transposon Ty1-ER2 Gag-Pol polyprotein (TY1B-ER2) from Saccharomyces cerevisiae (strain ATCC 204508 / S288c) (Baker's yeast).